A 154-amino-acid chain; its full sequence is MKNADRGVAAELDGSDLRVAIVQARFNAAITEQLASSCIAELEALGVLAKHIKHVTVPGALEVALALQALAEQKDHDALIALGCIIRGETYHFELVANESGAAVTRVSLEHGVPIANAILTVENEAQAWARADEKGRDAARVAVEMANLMEDLS.

5-amino-6-(D-ribitylamino)uracil-binding positions include Phe-26, 60 to 62 (ALE), and 84 to 86 (CII). 89-90 (ET) provides a ligand contact to (2S)-2-hydroxy-3-oxobutyl phosphate. His-92 serves as the catalytic Proton donor. Asn-117 lines the 5-amino-6-(D-ribitylamino)uracil pocket. Arg-131 is a binding site for (2S)-2-hydroxy-3-oxobutyl phosphate.

It belongs to the DMRL synthase family.

The catalysed reaction is (2S)-2-hydroxy-3-oxobutyl phosphate + 5-amino-6-(D-ribitylamino)uracil = 6,7-dimethyl-8-(1-D-ribityl)lumazine + phosphate + 2 H2O + H(+). It participates in cofactor biosynthesis; riboflavin biosynthesis; riboflavin from 2-hydroxy-3-oxobutyl phosphate and 5-amino-6-(D-ribitylamino)uracil: step 1/2. Catalyzes the formation of 6,7-dimethyl-8-ribityllumazine by condensation of 5-amino-6-(D-ribitylamino)uracil with 3,4-dihydroxy-2-butanone 4-phosphate. This is the penultimate step in the biosynthesis of riboflavin. The sequence is that of 6,7-dimethyl-8-ribityllumazine synthase from Leptothrix cholodnii (strain ATCC 51168 / LMG 8142 / SP-6) (Leptothrix discophora (strain SP-6)).